The primary structure comprises 1812 residues: Protein virilizer homolog (1812 aa).

Alanine 2 carries the post-translational modification N-acetylalanine. Disordered regions lie at residues 132-302 and 576-596; these read ISHD…EQIS and KTSS…GLER. Phosphoserine occurs at positions 133 and 138. Over residues 139–152 the composition is skewed to pro residues; sequence PPPPPPPPPPPQPQ. Over residues 160 to 169 the composition is skewed to basic and acidic residues; it reads KHADGEKEDQ. Serine 173 carries the phosphoserine modification. Pro residues predominate over residues 174–190; sequence PPRPQPRGPRTPPGPPP. Threonine 184 bears the Phosphothreonine mark. Serine 222 is modified (phosphoserine). The span at 224-233 shows a compositional bias: polar residues; that stretch reads DRNSVPQEGQ. Acidic residues-rich tracts occupy residues 234-266 and 274-302; these read YSDE…EDED and IPEE…EQIS. Over residues 584–596 the composition is skewed to basic and acidic residues; the sequence is SEPDHDTDAGLER. Residue tyrosine 914 is modified to Phosphotyrosine. The residue at position 1579 (serine 1579) is a Phosphoserine. Disordered stretches follow at residues 1616–1635 and 1663–1812; these read HVVP…GIRP and KEVV…SFTR. The span at 1689 to 1698 shows a compositional bias: gly residues; that stretch reads GFSGNRGGRG. Position 1708 is a phosphothreonine (threonine 1708). Arginine 1723 is modified (omega-N-methylarginine). Polar residues predominate over residues 1723–1748; that stretch reads RGSSWSAQNTPRGNYNESRGGQSNFN. Position 1741 is an asymmetric dimethylarginine; alternate (arginine 1741). Arginine 1741 is modified (omega-N-methylarginine; alternate). Arginine 1773, arginine 1775, and arginine 1793 each carry asymmetric dimethylarginine. The span at 1788 to 1802 shows a compositional bias: gly residues; that stretch reads GSGGSRGKFVSGGSG. Residues 1803–1812 are compositionally biased toward basic residues; sequence RGRHVRSFTR.

The protein belongs to the vir family. Component of the WMM complex, a N6-methyltransferase complex composed of a catalytic subcomplex, named MAC, and of an associated subcomplex, named MACOM. The MAC subcomplex is composed of METTL3 and METTL14. The MACOM subcomplex is composed of WTAP, ZC3H13, CBLL1/HAKAI, VIRMA, and, in some cases of RBM15 (RBM15 or RBM15B). Interacts with WTAP. Also a component of a MACOM-like complex, named WTAP complex, composed of WTAP, ZC3H13, CBLL1, VIRMA, RBM15, BCLAF1 and THRAP3. Interacts with NUDT21 and CPSF6.

It localises to the nucleus speckle. The protein resides in the nucleus. It is found in the nucleoplasm. The protein localises to the cytoplasm. Functionally, associated component of the WMM complex, a complex that mediates N6-methyladenosine (m6A) methylation of RNAs, a modification that plays a role in the efficiency of mRNA splicing and RNA processing. Acts as a key regulator of m6A methylation by promoting m6A methylation of mRNAs in the 3'-UTR near the stop codon: recruits the catalytic core components METTL3 and METTL14, thereby guiding m6A methylation at specific sites. Required for mRNA polyadenylation via its role in selective m6A methylation: m6A methylation of mRNAs in the 3'-UTR near the stop codon correlating with alternative polyadenylation (APA). This is Protein virilizer homolog from Homo sapiens (Human).